The chain runs to 179 residues: MAELATIARPYAEALFRVAEGGDIAAWSTLVQELAQVARLPEVLSVASSPKVTRTQVAELLLAAVKSPVAAGAEAKNFVQMLVDNHRIALLPEIAEQFEALKNEREGAADAEIVSAFPLNGADLDSLVSGLERKFKRKLKPTVEVDSSLIGGVRVTVGDEVLDTSVRARLASMQAALTA.

Belongs to the ATPase delta chain family. F-type ATPases have 2 components, F(1) - the catalytic core - and F(0) - the membrane proton channel. F(1) has five subunits: alpha(3), beta(3), gamma(1), delta(1), epsilon(1). F(0) has three main subunits: a(1), b(2) and c(10-14). The alpha and beta chains form an alternating ring which encloses part of the gamma chain. F(1) is attached to F(0) by a central stalk formed by the gamma and epsilon chains, while a peripheral stalk is formed by the delta and b chains.

It localises to the cell inner membrane. In terms of biological role, f(1)F(0) ATP synthase produces ATP from ADP in the presence of a proton or sodium gradient. F-type ATPases consist of two structural domains, F(1) containing the extramembraneous catalytic core and F(0) containing the membrane proton channel, linked together by a central stalk and a peripheral stalk. During catalysis, ATP synthesis in the catalytic domain of F(1) is coupled via a rotary mechanism of the central stalk subunits to proton translocation. This protein is part of the stalk that links CF(0) to CF(1). It either transmits conformational changes from CF(0) to CF(1) or is implicated in proton conduction. The chain is ATP synthase subunit delta from Burkholderia orbicola (strain MC0-3).